The sequence spans 364 residues: 3-dehydroquinate synthase (364 aa).

NAD(+) is bound by residues 105–109, 129–130, Lys142, and Lys151; these read GVVGD and TT. Residues Glu184, His247, and His264 each contribute to the Zn(2+) site.

Belongs to the sugar phosphate cyclases superfamily. Dehydroquinate synthase family. Co(2+) serves as cofactor. Requires Zn(2+) as cofactor. The cofactor is NAD(+).

It localises to the cytoplasm. The catalysed reaction is 7-phospho-2-dehydro-3-deoxy-D-arabino-heptonate = 3-dehydroquinate + phosphate. It functions in the pathway metabolic intermediate biosynthesis; chorismate biosynthesis; chorismate from D-erythrose 4-phosphate and phosphoenolpyruvate: step 2/7. In terms of biological role, catalyzes the conversion of 3-deoxy-D-arabino-heptulosonate 7-phosphate (DAHP) to dehydroquinate (DHQ). The protein is 3-dehydroquinate synthase of Acidithiobacillus ferrooxidans (strain ATCC 23270 / DSM 14882 / CIP 104768 / NCIMB 8455) (Ferrobacillus ferrooxidans (strain ATCC 23270)).